The following is an 866-amino-acid chain: MAHQHDTGTAAAAAGKTAIHYDFAQIQAKWLPVWEKLKPFATDDPEDNRPRKYVLDMFPYPSGDLHMGHAEAYALGDVIARYWRHQGFSVLHPIGWDAFGLPAENAAIKRGLDPRGWTYDNIAQQKASMRRYAPSFDWDRVLQTCDPSYYKWNQWLFLKLYEKGLAYRKASQVNWCPFDQTVLANEQVVNGRCERCDNLVTKKKLTQWYFRITDYADRLLDDLNQLEGAWPAKVILMQRNWIGRSTGADVQFAIEGREEPVAVYTTRPDTLYGVTFMVVAPDSELAAELAEDARPEVKQRFEEYLAAVRGTTEMDRLSTEREKTGVFLERHAVNPLTGESIPIWAADYVLSDYGHGAIMAVPAHDQRDLDFARAFDLPVRVVVDTTQPATGAVPVIKTDPQTGEPLLPESAPLESPAETGQALTGEGRLINSGPFDGLSKSNAIRRVTEALQGSGLGAPAKNFRLRDWLISRQRYWGTPIPIVHCEACGEVPVPESELPVLLPPAEGLDLQPKGRSPLGAASDWVNVSCFSCGGPAQRDTDTMDTFVDSSWYFLRFLNPNDDTRAFDPREAEKWAPVDQYVGGVTHAILHLLYSRFITKVLFDQGFVSFTEPFTVLLNQGMVLMDGSAMSKSRGNLVKLSDQLDAHGVDAVRLTMSFAGPPEDDIDWADVSPSGSAKFLARAWRVAHDVTSAPDVVWKSGDPALRRVTHRFLADTPGLVEAFKFNVVVARLMELVNATRKTIDSGAGPADRAVREAAEVTTMALNLFAPYTAEDMWARLGYEPSVSLVPWRKPDPTLLIEEAVTAIVQVDGKVRDRVEVSPKISVDELEALARSSEAVLRSVGDREIVTVIVRAPKLVNIATRSRS.

A 'HIGH' region motif is present at residues 59–69; the sequence is PYPSGDLHMGH. A disordered region spans residues 393-421; sequence VPVIKTDPQTGEPLLPESAPLESPAETGQ. Low complexity predominate over residues 404–418; it reads EPLLPESAPLESPAE. The short motif at 628 to 632 is the 'KMSKS' region element; sequence AMSKS. Lysine 631 contributes to the ATP binding site.

It belongs to the class-I aminoacyl-tRNA synthetase family.

It is found in the cytoplasm. It carries out the reaction tRNA(Leu) + L-leucine + ATP = L-leucyl-tRNA(Leu) + AMP + diphosphate. In Leifsonia xyli subsp. xyli (strain CTCB07), this protein is Leucine--tRNA ligase.